Consider the following 313-residue polypeptide: Porphobilinogen deaminase (313 aa).

An S-(dipyrrolylmethanemethyl)cysteine modification is found at cysteine 242.

This sequence belongs to the HMBS family. Monomer. Dipyrromethane serves as cofactor.

The enzyme catalyses 4 porphobilinogen + H2O = hydroxymethylbilane + 4 NH4(+). Its pathway is porphyrin-containing compound metabolism; protoporphyrin-IX biosynthesis; coproporphyrinogen-III from 5-aminolevulinate: step 2/4. Tetrapolymerization of the monopyrrole PBG into the hydroxymethylbilane pre-uroporphyrinogen in several discrete steps. This chain is Porphobilinogen deaminase, found in Escherichia coli (strain K12 / MC4100 / BW2952).